The sequence spans 786 residues: Receptor-like protein 30 (786 aa).

A signal peptide spans 1-30; the sequence is MIPSQSNSFSGSVITLYFFLLGSLVLRTLA. Over 31-739 the chain is Extracellular; the sequence is SSRLHYCRHD…SEPEEQVINW (709 aa). Residues Asn-67, Asn-98, Asn-115, and Asn-133 are each glycosylated (N-linked (GlcNAc...) asparagine). 4 LRR repeats span residues 110 to 133, 134 to 158, 159 to 181, and 183 to 204; these read LQQL…SLGN, LSRL…VSKL, NQLR…SFTN, and TKLS…SFIL. N-linked (GlcNAc...) asparagine glycans are attached at residues Asn-181, Asn-199, and Asn-206. LRR repeat units follow at residues 207–231, 233–255, 257–279, 280–304, 305–328, 329–352, 354–375, 376–399, 400–423, 425–447, 448–472, 474–496, 497–524, and 526–546; these read LTSL…MSGL, NLKY…LFTI, SLQI…NISS, SSRL…ISEI, HSLI…ISKL, VNLQ…LWGL, TVTL…ALDG, ESMQ…ICKQ, RFLK…LKNS, YWLK…VFVN, ASML…LINC, GMEL…LVSL, PSLR…GFQH, and RLID…YFSN. N-linked (GlcNAc...) asparagine glycosylation is present at Asn-276. Asn-338 is a glycosylation site (N-linked (GlcNAc...) asparagine). Residues Asn-413, Asn-422, Asn-434, Asn-447, and Asn-471 are each glycosylated (N-linked (GlcNAc...) asparagine). N-linked (GlcNAc...) asparagine glycosylation occurs at Asn-558. 4 LRR repeats span residues 596-621, 622-645, 646-669, and 671-694; these read IPYF…VGLL, KELR…LANL, TNLE…LGSL, and FLST…QFQS. Residues Asn-628 and Asn-644 are each glycosylated (N-linked (GlcNAc...) asparagine). A glycan (N-linked (GlcNAc...) asparagine) is linked at Asn-676. A helical transmembrane segment spans residues 740-760; that stretch reads IAAAIAYGPGVFCGLVIGHIF. The Cytoplasmic portion of the chain corresponds to 761-786; that stretch reads FTAHKHEWFMEKFHRNKRRVVTTSAR.

Belongs to the RLP family.

The protein resides in the cell membrane. In terms of biological role, receptor for microbe-associated molecular patterns (MAMPs) that induces a BAK1-dependent basal immune response to necrotrophic fungi (e.g. S.sclerotiorum) in the presence of MAMPs (e.g. flg22 and SCLEROTINIA CULTURE FILTRATE ELICITOR1 (SCFE1) from the necrotrophic fungal pathogen S.sclerotiorum). Functionality seems to depend on the presence of the receptor kinase SOBIR1 as an adapter protein. Required for full non-host resistance to bacterial pathogens (e.g. P.syringae pv phaseolicola). The protein is Receptor-like protein 30 of Arabidopsis thaliana (Mouse-ear cress).